A 145-amino-acid chain; its full sequence is Phosphoribosyl-AMP cyclohydrolase (145 aa).

Aspartate 87 lines the Mg(2+) pocket. Cysteine 88 provides a ligand contact to Zn(2+). Mg(2+) is bound by residues aspartate 89 and aspartate 91. Zn(2+) is bound by residues cysteine 104 and cysteine 111.

This sequence belongs to the PRA-CH family. In terms of assembly, homodimer. Requires Mg(2+) as cofactor. Zn(2+) is required as a cofactor.

It localises to the cytoplasm. The enzyme catalyses 1-(5-phospho-beta-D-ribosyl)-5'-AMP + H2O = 1-(5-phospho-beta-D-ribosyl)-5-[(5-phospho-beta-D-ribosylamino)methylideneamino]imidazole-4-carboxamide. It participates in amino-acid biosynthesis; L-histidine biosynthesis; L-histidine from 5-phospho-alpha-D-ribose 1-diphosphate: step 3/9. Catalyzes the hydrolysis of the adenine ring of phosphoribosyl-AMP. The chain is Phosphoribosyl-AMP cyclohydrolase from Nitrobacter winogradskyi (strain ATCC 25391 / DSM 10237 / CIP 104748 / NCIMB 11846 / Nb-255).